The primary structure comprises 692 residues: Sodium- and chloride-dependent glycine transporter 1 (692 aa).

The segment at 1–34 is disordered; sequence MIGGDTRAASAHPGMASAQGPVATPSPEQPFPGT. Residues 1–94 are Cytoplasmic-facing; it reads MIGGDTRAAS…TRGNWGNQIE (94 aa). Transmembrane regions (helical) follow at residues 95–115, 122–142, and 174–194; these read FVLT…FPYL, GAFM…LFFM, and VSTY…YYFF. The Extracellular portion of the chain corresponds to 195–271; sequence SSMTHVLPWA…LSDDIGNFGE (77 aa). Helical transmembrane passes span 272–292, 301–321, 346–366, 393–413, 436–456, 492–512, 516–536, 556–576, and 596–616; these read VRLP…LCLI, VVYF…VRGV, VWGD…GGLI, SVYA…HLGV, LLPI…LLGL, VAGF…WLLL, YAAS…IMYI, LFFQ…ILIF, and VAIG…YALF. Residues 617–692 lie on the Cytoplasmic side of the membrane; that stretch reads QLCRTDGDTL…GSSRFQDSRI (76 aa). T657 is subject to Phosphothreonine. S659 and S684 each carry phosphoserine. Positions 681–692 are essential for interaction with EXOC1; the sequence is SNGSSRFQDSRI.

Belongs to the sodium:neurotransmitter symporter (SNF) (TC 2.A.22) family. SLC6A9 subfamily. In terms of assembly, interacts with EXOC1; interaction increases the transporter capacity of SLC6A9 probably by promoting its insertion into the cell membrane. Interacts with EXOC3 and EXOC4. As to expression, expressed in the brain (at protein level). At 11 dpc, expressed in the ventral part of the ventricular zone. At 15 dpc, also expressed in adjacent mantle tissue and the meninges. Strongly expressed in 12 dpc and 15 dpc liver. Expressed in the brain.

The protein resides in the cell membrane. It catalyses the reaction glycine(out) + chloride(out) + 2 Na(+)(out) = glycine(in) + chloride(in) + 2 Na(+)(in). Functionally, sodium- and chloride-dependent glycine transporter which is essential for regulating glycine concentrations at inhibitory glycinergic synapses. Sodium- and chloride-dependent glycine transporter. The sequence is that of Sodium- and chloride-dependent glycine transporter 1 (Slc6a9) from Mus musculus (Mouse).